The primary structure comprises 232 residues: Clarin-1 (232 aa).

Residues 8 to 28 (IIFCMAGVLSFLCALGVVTAV) traverse the membrane as a helical segment. A glycan (N-linked (GlcNAc...) asparagine) is linked at asparagine 48. The next 2 helical transmembrane spans lie at 101–121 (IILFSMILVVLTMVGTAFFMY) and 135–155 (LGLYLVSFISGSCGCLVMILF). The N-linked (GlcNAc...) asparagine glycan is linked to asparagine 184. A helical transmembrane segment spans residues 186–206 (TTSFWVVFICFFVHFLNGLLI).

Belongs to the clarin family.

The protein resides in the cell membrane. May have a role in the excitatory ribbon synapse junctions between hair cells and cochlear ganglion cells and presumably also in analogous synapses within the retina. This Mus musculus (Mouse) protein is Clarin-1 (Clrn1).